The chain runs to 72 residues: Palustrin-2CG1 (72 aa).

A signal peptide spans M1–C22. A propeptide spans Q23–V39 (removed in mature form). Residues C64 and C70 are joined by a disulfide bond.

In terms of tissue distribution, expressed by the skin glands.

The protein localises to the secreted. Functionally, antimicrobial peptide active against a variety of Gram-positive and some Gram-negative bacterial strains. Has antifungal activity against a slime mold isolate. Has hemolytic activity against human erythrocytes. The chain is Palustrin-2CG1 from Amolops chunganensis (Chungan torrent frog).